The primary structure comprises 425 residues: Histidine--tRNA ligase 1 (425 aa).

The protein belongs to the class-II aminoacyl-tRNA synthetase family. Homodimer.

The protein resides in the cytoplasm. The catalysed reaction is tRNA(His) + L-histidine + ATP = L-histidyl-tRNA(His) + AMP + diphosphate + H(+). The sequence is that of Histidine--tRNA ligase 1 from Bacillus thuringiensis subsp. konkukian (strain 97-27).